The primary structure comprises 324 residues: MTTKTGILLVNLGTPAAPTTAAVKAFLSQFLHDQRVVDLPRYLWCPLLHFIILPTRSPKVAKLYQQVWTEQGSPLMVISKQQRAALEQELKREGVEVPVELAMTYGSPSLDEGWQALKAKGVNRVILLPLYPQYSVSTTASVFDGWAKAMKKERNLPVVRLIRDYHAHPEYIQALAMSVRRHWEQHGQGEHLLMSFHGIPERYEREGDPYGHQCRRTAALLAEVLGLEASQWTASFQSRFGKEEWLKPYTDVTIAGLPATGIKRLDVICPAFAADCLETLEEIQVQNREIFMAAGGEQFEYIPALNSDQAHIRMMVSLICRELA.

2 residues coordinate Fe cation: histidine 197 and glutamate 278.

It belongs to the ferrochelatase family.

Its subcellular location is the cytoplasm. The catalysed reaction is heme b + 2 H(+) = protoporphyrin IX + Fe(2+). It participates in porphyrin-containing compound metabolism; protoheme biosynthesis; protoheme from protoporphyrin-IX: step 1/1. Functionally, catalyzes the ferrous insertion into protoporphyrin IX. This chain is Ferrochelatase, found in Aeromonas hydrophila subsp. hydrophila (strain ATCC 7966 / DSM 30187 / BCRC 13018 / CCUG 14551 / JCM 1027 / KCTC 2358 / NCIMB 9240 / NCTC 8049).